The sequence spans 240 residues: Orotidine 5'-phosphate decarboxylase (240 aa).

Substrate-binding positions include aspartate 10, lysine 33, 60–69 (DLKLHDIPNT), threonine 123, arginine 185, glutamine 194, glycine 214, and arginine 215. Lysine 62 functions as the Proton donor in the catalytic mechanism.

The protein belongs to the OMP decarboxylase family. Type 1 subfamily. In terms of assembly, homodimer.

It catalyses the reaction orotidine 5'-phosphate + H(+) = UMP + CO2. It participates in pyrimidine metabolism; UMP biosynthesis via de novo pathway; UMP from orotate: step 2/2. In terms of biological role, catalyzes the decarboxylation of orotidine 5'-monophosphate (OMP) to uridine 5'-monophosphate (UMP). The protein is Orotidine 5'-phosphate decarboxylase of Lactobacillus delbrueckii subsp. bulgaricus (strain ATCC 11842 / DSM 20081 / BCRC 10696 / JCM 1002 / NBRC 13953 / NCIMB 11778 / NCTC 12712 / WDCM 00102 / Lb 14).